A 215-amino-acid chain; its full sequence is Large ribosomal subunit protein bL25 (215 aa).

Residues 1–10 (MAKSASNQLR) are compositionally biased toward polar residues. 2 disordered regions span residues 1–25 (MAKS…SRRA) and 187–215 (ELEG…GESE).

The protein belongs to the bacterial ribosomal protein bL25 family. CTC subfamily. As to quaternary structure, part of the 50S ribosomal subunit; part of the 5S rRNA/L5/L18/L25 subcomplex. Contacts the 5S rRNA. Binds to the 5S rRNA independently of L5 and L18.

This is one of the proteins that binds to the 5S RNA in the ribosome where it forms part of the central protuberance. The chain is Large ribosomal subunit protein bL25 from Mycobacterium bovis (strain ATCC BAA-935 / AF2122/97).